A 428-amino-acid polypeptide reads, in one-letter code: Histidine--tRNA ligase (428 aa).

This sequence belongs to the class-II aminoacyl-tRNA synthetase family. In terms of assembly, homodimer.

The protein localises to the cytoplasm. The enzyme catalyses tRNA(His) + L-histidine + ATP = L-histidyl-tRNA(His) + AMP + diphosphate + H(+). In Chlamydia trachomatis serovar A (strain ATCC VR-571B / DSM 19440 / HAR-13), this protein is Histidine--tRNA ligase.